Consider the following 131-residue polypeptide: Small ribosomal subunit protein uS8 (131 aa).

The protein belongs to the universal ribosomal protein uS8 family. Part of the 30S ribosomal subunit. Contacts proteins S5 and S12.

Functionally, one of the primary rRNA binding proteins, it binds directly to 16S rRNA central domain where it helps coordinate assembly of the platform of the 30S subunit. This is Small ribosomal subunit protein uS8 from Bacteroides fragilis (strain ATCC 25285 / DSM 2151 / CCUG 4856 / JCM 11019 / LMG 10263 / NCTC 9343 / Onslow / VPI 2553 / EN-2).